We begin with the raw amino-acid sequence, 435 residues long: uncharacterized protein (435 aa).

Serine 47 is modified (phosphoserine). 2 disordered regions span residues leucine 174 to aspartate 210 and lysine 290 to lysine 372. Over residues asparagine 195–aspartate 210 the composition is skewed to acidic residues. The span at lysine 290–alanine 304 shows a compositional bias: basic and acidic residues. Polar residues predominate over residues serine 308–threonine 318. Basic and acidic residues-rich tracts occupy residues glutamate 322–asparagine 340 and valine 347–aspartate 361.

Its subcellular location is the cytoplasm. This is an uncharacterized protein from Saccharomyces cerevisiae (strain ATCC 204508 / S288c) (Baker's yeast).